The primary structure comprises 371 residues: Fructose-1,6-bisphosphatase class 1 1 (371 aa).

Mg(2+)-binding residues include E115, D134, L136, and D137. Residues 137–140, N228, and 280–282 each bind substrate; these read DGSS and YLY. Mg(2+) is bound at residue E300.

The protein belongs to the FBPase class 1 family. Homotetramer. Mg(2+) serves as cofactor.

Its subcellular location is the cytoplasm. The enzyme catalyses beta-D-fructose 1,6-bisphosphate + H2O = beta-D-fructose 6-phosphate + phosphate. It functions in the pathway carbohydrate biosynthesis; gluconeogenesis. This is Fructose-1,6-bisphosphatase class 1 1 from Xanthobacter autotrophicus (strain ATCC BAA-1158 / Py2).